A 75-amino-acid chain; its full sequence is MAKVDIDIVDFEYIEEIIRNRYPELSITSVQDSKFWSIQIVIEGPLEDLTRFMANEYCDGMDAEDAEFYMGLIEQ.

This is an uncharacterized protein from Enterobacteria phage T6 (Bacteriophage T6).